Here is a 270-residue protein sequence, read N- to C-terminus: Replication protein A 32 kDa subunit (270 aa).

Met-1 carries the N-acetylmethionine modification. A phosphoserine; by PRKDC mark is found at Ser-4 and Ser-8. Thr-21 bears the Phosphothreonine; by PRKDC mark. The tract at residues 22–41 is disordered; sequence QSPGGFGSPTPSQAEKKSRA. At Ser-23 the chain carries Phosphoserine; by CDK2. Residue Ser-29 is modified to Phosphoserine; by CDK1. The residue at position 33 (Ser-33) is a Phosphoserine; by PRKDC. Residues Lys-37 and Lys-38 each participate in a glycyl lysine isopeptide (Lys-Gly) (interchain with G-Cter in ubiquitin) cross-link. The OB DNA-binding region spans 74–148; sequence VTIVGIIRHA…KSLVAFKIIP (75 aa). The interaction with RAD52, TIPIN, UNG and XPA stretch occupies residues 187 to 270; that stretch reads GMGEPGNFSG…DDHFKSTDAE (84 aa).

It belongs to the replication factor A protein 2 family. Component of the replication protein A complex (RPA/RP-A), a heterotrimeric complex composed of RPA1, RPA2 and RPA3. Interacts with PRPF19; the PRP19-CDC5L complex is recruited to the sites of DNA repair where it ubiquitinates the replication protein A complex (RPA). Interacts with SERTAD3. Interacts with TIPIN. Interacts with TIMELESS. Interacts with PPP4R2; the interaction is direct, DNA damage-dependent and mediates the recruitment of the PP4 catalytic subunit PPP4C. Interacts (hyperphosphorylated) with RAD51. Interacts with SMARCAL1; the interaction is direct and mediates the recruitment to the RPA complex of SMARCAL1. Interacts with RAD52 and XPA; those interactions are direct and associate RAD52 and XPA to the RPA complex. Interacts with FBH1. Interacts with ETAA1; the interaction is direct and promotes ETAA1 recruitment at stalled replication forks. Interacts with DDI2. Interacts (in unphosphorylated form via N-terminus) with EIF4EBP3; the interaction enhances EIF4EBP3-mediated inhibition of EIF4E-mediated mRNA nuclear export. Interacts with nuclear UNG (isoform 2); this interaction mediates UNG recruitment to RPA-coated single-stranded DNA at stalled replication forks. Differentially phosphorylated throughout the cell cycle, becoming phosphorylated at the G1-S transition and dephosphorylated in late mitosis. Mainly phosphorylated at Ser-23 and Ser-29, by cyclin A-CDK2 and cyclin B-CDK1, respectively during DNA replication and mitosis. Dephosphorylation may require the serine/threonine-protein phosphatase 4. Phosphorylation at Ser-23 and Ser-29 is a prerequisite for further phosphorylation. Becomes hyperphosphorylated on additional residues including Ser-4, Ser-8, Thr-21 and Ser-33 in response to DNA damage. Hyperphosphorylation is mediated by ATM, ATR and PRKDC. Primarily recruited to DNA repair nuclear foci as a hypophosphorylated form it undergoes subsequent hyperphosphorylation, catalyzed by ATR. Hyperphosphorylation is required for RAD51 recruitment to chromatin and efficient DNA repair. Phosphorylation at Thr-21 depends upon RFWD3 presence. In terms of processing, DNA damage-induced 'Lys-63'-linked polyubiquitination by PRPF19 mediates ATRIP recruitment to the RPA complex at sites of DNA damage and activation of ATR. Ubiquitinated by RFWD3 at stalled replication forks in response to DNA damage: ubiquitination by RFWD3 does not lead to degradation by the proteasome and promotes removal of the RPA complex from stalled replication forks, promoting homologous recombination.

The protein resides in the nucleus. Its subcellular location is the PML body. As part of the heterotrimeric replication protein A complex (RPA/RP-A), binds and stabilizes single-stranded DNA intermediates, that form during DNA replication or upon DNA stress. It prevents their reannealing and in parallel, recruits and activates different proteins and complexes involved in DNA metabolism. Thereby, it plays an essential role both in DNA replication and the cellular response to DNA damage. In the cellular response to DNA damage, the RPA complex controls DNA repair and DNA damage checkpoint activation. Through recruitment of ATRIP activates the ATR kinase a master regulator of the DNA damage response. It is required for the recruitment of the DNA double-strand break repair factors RAD51 and RAD52 to chromatin in response to DNA damage. Also recruits to sites of DNA damage proteins like XPA and XPG that are involved in nucleotide excision repair and is required for this mechanism of DNA repair. Also plays a role in base excision repair (BER) probably through interaction with UNG. Also recruits SMARCAL1/HARP, which is involved in replication fork restart, to sites of DNA damage. May also play a role in telomere maintenance. The sequence is that of Replication protein A 32 kDa subunit (Rpa2) from Rattus norvegicus (Rat).